The chain runs to 427 residues: Serine hydroxymethyltransferase (427 aa).

Residues L118 and G122–L124 each bind (6S)-5,6,7,8-tetrahydrofolate. K227 carries the post-translational modification N6-(pyridoxal phosphate)lysine. (6S)-5,6,7,8-tetrahydrofolate-binding positions include E243 and S351–F353.

This sequence belongs to the SHMT family. In terms of assembly, homodimer. Pyridoxal 5'-phosphate serves as cofactor.

It localises to the cytoplasm. The catalysed reaction is (6R)-5,10-methylene-5,6,7,8-tetrahydrofolate + glycine + H2O = (6S)-5,6,7,8-tetrahydrofolate + L-serine. It participates in one-carbon metabolism; tetrahydrofolate interconversion. Its pathway is amino-acid biosynthesis; glycine biosynthesis; glycine from L-serine: step 1/1. Functionally, catalyzes the reversible interconversion of serine and glycine with tetrahydrofolate (THF) serving as the one-carbon carrier. This reaction serves as the major source of one-carbon groups required for the biosynthesis of purines, thymidylate, methionine, and other important biomolecules. Also exhibits THF-independent aldolase activity toward beta-hydroxyamino acids, producing glycine and aldehydes, via a retro-aldol mechanism. This chain is Serine hydroxymethyltransferase, found in Thermotoga neapolitana (strain ATCC 49049 / DSM 4359 / NBRC 107923 / NS-E).